Here is a 344-residue protein sequence, read N- to C-terminus: Oxygen sensor histidine kinase NreB (344 aa).

The [4Fe-4S] cluster site is built by Cys58, Cys61, Cys73, and Cys76. Residues 152–344 enclose the Histidine kinase domain; sequence RISRELHDSV…GTNVTLNIPI (193 aa). At His158 the chain carries Phosphohistidine; by autocatalysis.

[4Fe-4S] cluster serves as cofactor. Post-translationally, autophosphorylated.

It localises to the cytoplasm. It catalyses the reaction ATP + protein L-histidine = ADP + protein N-phospho-L-histidine.. Its function is as follows. Member of the two-component regulatory system NreB/NreC involved in the control of dissimilatory nitrate/nitrite reduction in response to oxygen. NreB functions as a direct oxygen sensor histidine kinase which is autophosphorylated, in the absence of oxygen, probably at the conserved histidine residue, and transfers its phosphate group probably to a conserved aspartate residue of NreC. NreB/NreC activates the expression of the nitrate (narGHJI) and nitrite (nir) reductase operons, as well as the putative nitrate transporter gene narT. In Staphylococcus aureus (strain Mu3 / ATCC 700698), this protein is Oxygen sensor histidine kinase NreB (nreB).